Consider the following 469-residue polypeptide: Tetratricopeptide repeat protein 38 (469 aa).

TPR repeat units lie at residues 107–140 (REMLHVAAVETFANGNLPKAADLWERILQNHPTD), 179–212 (SYVKGMYSFGLLETNFYDQALKVAKEALAVDQTD), and 251–284 (CHVYWHWALYFIEKGDYEAALTLYDNHIAPQCFA).

It belongs to the TTC38 family.

This Xenopus tropicalis (Western clawed frog) protein is Tetratricopeptide repeat protein 38 (ttc38).